The chain runs to 256 residues: Ubiquinone/menaquinone biosynthesis C-methyltransferase UbiE (256 aa).

Basic and acidic residues predominate over residues 1–12 (MNDQRKGDHAEP). A disordered region spans residues 1 to 23 (MNDQRKGDHAEPTTHFGYQDVPE). Residues T79, D100, and 128–129 (DA) each bind S-adenosyl-L-methionine.

Belongs to the class I-like SAM-binding methyltransferase superfamily. MenG/UbiE family.

It catalyses the reaction a 2-demethylmenaquinol + S-adenosyl-L-methionine = a menaquinol + S-adenosyl-L-homocysteine + H(+). It carries out the reaction a 2-methoxy-6-(all-trans-polyprenyl)benzene-1,4-diol + S-adenosyl-L-methionine = a 5-methoxy-2-methyl-3-(all-trans-polyprenyl)benzene-1,4-diol + S-adenosyl-L-homocysteine + H(+). Its pathway is quinol/quinone metabolism; menaquinone biosynthesis; menaquinol from 1,4-dihydroxy-2-naphthoate: step 2/2. It functions in the pathway cofactor biosynthesis; ubiquinone biosynthesis. Functionally, methyltransferase required for the conversion of demethylmenaquinol (DMKH2) to menaquinol (MKH2) and the conversion of 2-polyprenyl-6-methoxy-1,4-benzoquinol (DDMQH2) to 2-polyprenyl-3-methyl-6-methoxy-1,4-benzoquinol (DMQH2). This Pseudomonas putida (strain ATCC 700007 / DSM 6899 / JCM 31910 / BCRC 17059 / LMG 24140 / F1) protein is Ubiquinone/menaquinone biosynthesis C-methyltransferase UbiE.